A 155-amino-acid polypeptide reads, in one-letter code: UPF0303 protein lp_3613 (155 aa).

This sequence belongs to the UPF0303 family.

In Lactiplantibacillus plantarum (strain ATCC BAA-793 / NCIMB 8826 / WCFS1) (Lactobacillus plantarum), this protein is UPF0303 protein lp_3613.